The primary structure comprises 989 residues: Phosphoenolpyruvate carboxylase (989 aa).

Active-site residues include His175 and Lys630.

Belongs to the PEPCase type 1 family. Mg(2+) is required as a cofactor.

It catalyses the reaction oxaloacetate + phosphate = phosphoenolpyruvate + hydrogencarbonate. In terms of biological role, forms oxaloacetate, a four-carbon dicarboxylic acid source for the tricarboxylic acid cycle. The chain is Phosphoenolpyruvate carboxylase from Prochlorococcus marinus (strain AS9601).